An 819-amino-acid chain; its full sequence is Plastid division protein CDP1, chloroplastic (819 aa).

Residues methionine 1 to valine 76 constitute a chloroplast transit peptide. Over aspartate 77–glutamine 572 the chain is Stromal. Residues glutamate 419–asparagine 439 are a coiled coil. The chain crosses the membrane as a helical span at residues serine 573 to leucine 593. Over lysine 594–lysine 819 the chain is Chloroplast intermembrane. A coiled-coil region spans residues isoleucine 762 to glutamate 782.

In terms of assembly, self-interacts. Interacts (via N-terminus) with ARC3 (via MORN domains). Binds (via N-terminus) to FTSZ2 proteins, FTSZ2-1 and FTSZ2-2. Recruited ARC3 to the middle of the plastid where subsequent complex made of CDP1/PARC6, ARC3 and FtsZ proteins can form; this complex enhances the dynamics of Z rings during chloroplast division. Interacts (via C-terminus) with PDV1 (via C-terminus). Interacts with MIND1. Exclusively expressed in young green tissues such as young cotyledons, shoot apex, emerging leaves and budding inflorescence.

The protein localises to the plastid. It is found in the chloroplast inner membrane. Its function is as follows. Component of the plastid division machinery required for PDV1 localization to constriction sites. Involved in chloroplast division site placement. Required for the proper formation of FtsZ rings at the division site in nongreen plastids (e.g. etioplasts). Inhibits FtsZ assembly, functioning as an antagonistic regulator of FtsZ dynamics against ARC6, by recruiting ARC3 to the middle of the plastid to facilitate its interaction with FtsZ proteins. Required during stromule biogenesis in the leaf epidermis, especially in non-mesophyll cells plastids. The polypeptide is Plastid division protein CDP1, chloroplastic (Arabidopsis thaliana (Mouse-ear cress)).